The chain runs to 401 residues: Leucine aminopeptidase 1 (401 aa).

Positions 1–18 (MKVAKASLLTILAHSVSA) are cleaved as a signal peptide. The propeptide occupies 19-87 (RFLAEDEINR…GATRLRTKTK (69 aa)). A glycan (N-linked (GlcNAc...) asparagine) is linked at asparagine 179. Zn(2+) is bound by residues histidine 187, aspartate 206, glutamate 245, and aspartate 272. A disulfide bond links cysteine 321 and cysteine 325. Histidine 354 provides a ligand contact to Zn(2+).

The protein belongs to the peptidase M28 family. M28E subfamily. As to quaternary structure, monomer. Zn(2+) serves as cofactor.

It is found in the secreted. Functionally, extracellular aminopeptidase that allows assimilation of proteinaceous substrates. The polypeptide is Leucine aminopeptidase 1 (LAP1) (Colletotrichum graminicola (strain M1.001 / M2 / FGSC 10212) (Maize anthracnose fungus)).